A 198-amino-acid polypeptide reads, in one-letter code: Ras-related protein RabH (198 aa).

Glycine 14–serine 21 lines the GTP pocket. The Effector region signature appears at threonine 36–phenylalanine 44. Residues aspartate 62–methionine 66 and serine 120–aspartate 123 each bind GTP. Cysteine methyl ester is present on cysteine 195. Cysteine 195 carries the S-geranylgeranyl cysteine lipid modification. The propeptide at serine 196 to asparagine 198 is removed in mature form.

This sequence belongs to the small GTPase superfamily. Rab family.

The protein resides in the cell membrane. This chain is Ras-related protein RabH (rabH), found in Dictyostelium discoideum (Social amoeba).